The primary structure comprises 393 residues: Formate-dependent phosphoribosylglycinamide formyltransferase (393 aa).

N(1)-(5-phospho-beta-D-ribosyl)glycinamide contacts are provided by residues 22–23 (EL) and glutamate 82. Residues arginine 114, lysine 155, 160–165 (SSGHGQ), 195–198 (EGFI), and glutamate 203 each bind ATP. Residues 119–308 (RLAAEELGLK…QFALHARAIL (190 aa)) enclose the ATP-grasp domain. Glutamate 267 and glutamate 279 together coordinate Mg(2+). Residues aspartate 286, lysine 356, and 363-364 (RR) contribute to the N(1)-(5-phospho-beta-D-ribosyl)glycinamide site.

It belongs to the PurK/PurT family. Homodimer.

It catalyses the reaction N(1)-(5-phospho-beta-D-ribosyl)glycinamide + formate + ATP = N(2)-formyl-N(1)-(5-phospho-beta-D-ribosyl)glycinamide + ADP + phosphate + H(+). It participates in purine metabolism; IMP biosynthesis via de novo pathway; N(2)-formyl-N(1)-(5-phospho-D-ribosyl)glycinamide from N(1)-(5-phospho-D-ribosyl)glycinamide (formate route): step 1/1. In terms of biological role, involved in the de novo purine biosynthesis. Catalyzes the transfer of formate to 5-phospho-ribosyl-glycinamide (GAR), producing 5-phospho-ribosyl-N-formylglycinamide (FGAR). Formate is provided by PurU via hydrolysis of 10-formyl-tetrahydrofolate. This Actinobacillus pleuropneumoniae serotype 5b (strain L20) protein is Formate-dependent phosphoribosylglycinamide formyltransferase.